Reading from the N-terminus, the 290-residue chain is Shikimate dehydrogenase (NADP(+)) (290 aa).

Residues 19–21 (SLS) and Ser65 each bind shikimate. Residue Lys69 is the Proton acceptor of the active site. The shikimate site is built by Asn90 and Asp105. Residues 129–133 (GAGGA) and Leu231 each bind NADP(+). Residue Tyr233 participates in shikimate binding. An NADP(+)-binding site is contributed by Gly254.

It belongs to the shikimate dehydrogenase family. In terms of assembly, homodimer.

It carries out the reaction shikimate + NADP(+) = 3-dehydroshikimate + NADPH + H(+). It functions in the pathway metabolic intermediate biosynthesis; chorismate biosynthesis; chorismate from D-erythrose 4-phosphate and phosphoenolpyruvate: step 4/7. In terms of biological role, involved in the biosynthesis of the chorismate, which leads to the biosynthesis of aromatic amino acids. Catalyzes the reversible NADPH linked reduction of 3-dehydroshikimate (DHSA) to yield shikimate (SA). The chain is Shikimate dehydrogenase (NADP(+)) from Latilactobacillus sakei subsp. sakei (strain 23K) (Lactobacillus sakei subsp. sakei).